The sequence spans 287 residues: Ribonuclease Z (287 aa).

Zn(2+) contacts are provided by His-64, His-66, Asp-68, His-69, His-124, Asp-191, and His-250. Asp-68 functions as the Proton acceptor in the catalytic mechanism.

Belongs to the RNase Z family. In terms of assembly, homodimer. Requires Zn(2+) as cofactor.

It carries out the reaction Endonucleolytic cleavage of RNA, removing extra 3' nucleotides from tRNA precursor, generating 3' termini of tRNAs. A 3'-hydroxy group is left at the tRNA terminus and a 5'-phosphoryl group is left at the trailer molecule.. In terms of biological role, zinc phosphodiesterase, which displays some tRNA 3'-processing endonuclease activity. Probably involved in tRNA maturation, by removing a 3'-trailer from precursor tRNA. This Pyrobaculum arsenaticum (strain DSM 13514 / JCM 11321 / PZ6) protein is Ribonuclease Z.